The following is a 688-amino-acid chain: MMLSHWVLLLSLGAVWLAEGGEISPGSCTFENSTCAYTSAFPFLQWTVNIEGHYVSVDSSNGLRGQKAVLISPDLHLAEWSCLRLVYQIAGSESSPSPSSLNVFVRPEGESFDYLLWSAEEHSDSWLISSIDLKNTTKRFKIILEGVLGENTMSSIAIFEVKMTTGYCIECDFEENHLCGYMNSWNPNVNWFVGGGNVKNSHSILPRDHTLNNELGHYMYVDSVYVKHFQEVAQLVSPLIITPISGCLSFYYQLQRETSNIFLVHTRDLHGSYDEIWKMGAVRQGEWNLAEVDLNAHVPLEVIFEVAFNGIQAGYVALDDILFSPVSCSGQEGMFFDAREAGCDFEEGMCQFHQDDNNGSGWSRVKVKPNAYQMGDHTTGLGYFMIANTRFTGQPAYFGRLYGPSLPGNIQYCIRFFYSLYGFYKTIDSLAVYIFEENHVVQEKIWSAHETPKGVWLQAEISIHKPMPFKVVFVSWCKSLWDCGIAALDDISVSIGSCKISDRIPPLPGKCTFEKNDCGFEQEWQRRGIWHRIQGRTPTFYTGPNGDHTSGVGYYMYIEATNMVFGQKAKLISRPLRAVAGKQCLTFYYHMYGAGTGLLNVYLTKEGDINKDTLLWTRKGEQSITWLKAQMEYESEQQHKIVFEAVRGISIRSDIAIDDILFQNGPCNDSSDPLQSSGYSDNFNNIEF.

The N-terminal stretch at methionine 1 to glycine 20 is a signal peptide. 4 consecutive MAM domains span residues glycine 26–isoleucine 169, glutamate 170–glycine 330, alanine 341–isoleucine 500, and glycine 509–aspartate 669. 2 N-linked (GlcNAc...) asparagine glycosylation sites follow: asparagine 32 and asparagine 135. Residues asparagine 358 and asparagine 668 are each glycosylated (N-linked (GlcNAc...) asparagine).

Its subcellular location is the membrane. It localises to the secreted. The protein localises to the extracellular space. The chain is Thyroid hormone-induced protein B from Xenopus laevis (African clawed frog).